Reading from the N-terminus, the 166-residue chain is Phosphopantetheine adenylyltransferase (166 aa).

Serine 11 serves as a coordination point for substrate. ATP is bound by residues 11 to 12 and histidine 19; that span reads SF. The substrate site is built by lysine 43, alanine 76, and arginine 90. ATP-binding positions include 91–93, glutamate 101, and 126–132; these read GLR and LQPVSSS.

The protein belongs to the bacterial CoaD family. As to quaternary structure, homohexamer. Requires Mg(2+) as cofactor.

The protein localises to the cytoplasm. The enzyme catalyses (R)-4'-phosphopantetheine + ATP + H(+) = 3'-dephospho-CoA + diphosphate. It participates in cofactor biosynthesis; coenzyme A biosynthesis; CoA from (R)-pantothenate: step 4/5. Reversibly transfers an adenylyl group from ATP to 4'-phosphopantetheine, yielding dephospho-CoA (dPCoA) and pyrophosphate. The polypeptide is Phosphopantetheine adenylyltransferase (Streptococcus equi subsp. equi (strain 4047)).